We begin with the raw amino-acid sequence, 132 residues long: uncharacterized protein (132 aa).

An N-terminal signal peptide occupies residues 1–24 (MVTIGSSSLVLFLFFVVFVQITYT). A run of 2 helical transmembrane segments spans residues 75–95 (YVNVEIIVGIPLLIKAIILGI) and 112–132 (ESAILHNSINIIIIILYVYIH).

The protein localises to the membrane. This is an uncharacterized protein from Saccharomyces cerevisiae (strain ATCC 204508 / S288c) (Baker's yeast).